Here is a 442-residue protein sequence, read N- to C-terminus: Cyclin-A1-2 (442 aa).

Polar residues-rich tracts occupy residues 1–12 and 39–63; these read MSSSSRNLSQEN and ITNQKNGSRNPSPSSTLVNCSNKIG. Residues 1–72 form a disordered region; the sequence is MSSSSRNLSQ…GQSKKAPKPA (72 aa).

Belongs to the cyclin family. Cyclin AB subfamily. As to quaternary structure, interacts with CDC20-1, CDC20-2, FZR2/CCS52A1 and FZR1/CCS52A2. In terms of tissue distribution, expressed in roots, stems and flowers.

Its subcellular location is the cytoplasm. The protein resides in the nucleus. Functionally, involved in the regulation of male meiosis progression. This Arabidopsis thaliana (Mouse-ear cress) protein is Cyclin-A1-2 (CYCA1-2).